The sequence spans 279 residues: Lipid phosphate phosphatase epsilon 1, chloroplastic (279 aa).

Residues 1 to 88 (MAASSSLLLL…SFINNSSEIR (88 aa)) constitute a chloroplast transit peptide. Transmembrane regions (helical) follow at residues 126–142 (LWAV…SVVL), 164–184 (SHAQ…MEWL), 185–205 (GTNG…SYFI), 219–239 (VVVG…MWNS), and 255–275 (VFLF…LNWF).

Belongs to the PA-phosphatase related phosphoesterase family. As to expression, expressed in root tips, root branch points, cotyledons and leaves.

It is found in the plastid. Its subcellular location is the chloroplast inner membrane. With respect to regulation, inhibited by Mg(2+). Its function is as follows. Exhibits phosphatidate phosphatase (PAP) activity in vitro. May play a secondary role as PAP in plastids. The protein is Lipid phosphate phosphatase epsilon 1, chloroplastic (LPPE1) of Arabidopsis thaliana (Mouse-ear cress).